The sequence spans 110 residues: uncharacterized protein (110 aa).

It belongs to the HesB/IscA family.

This is an uncharacterized protein from Rickettsia prowazekii (strain Madrid E).